The following is an 876-amino-acid chain: Eukaryotic translation initiation factor 3 subunit C (876 aa).

Disordered regions lie at residues 1-25 (MSRFFATGTDSESESSSEDEPVVRA) and 154-233 (SXFR…IREQ). A compositionally biased stretch (acidic residues) spans 11–20 (SESESSSEDE). 2 stretches are compositionally biased toward basic and acidic residues: residues 154-172 (SXFREDPDLPDDNERKDSS) and 182-192 (KPIKEKPKPEP). The span at 206–219 (SMDWASSSSDSSFS) shows a compositional bias: low complexity. The 177-residue stretch at 632–808 (FHMHINLELL…ECAILHRSEP (177 aa)) folds into the PCI domain. The tract at residues 839–876 (FFQRGGAQRGEGRQRERPREGWNRRTRNRRRDDERADD) is disordered. Residues 848 to 861 (GEGRQRERPREGWN) are compositionally biased toward basic and acidic residues.

This sequence belongs to the eIF-3 subunit C family. As to quaternary structure, component of the eukaryotic translation initiation factor 3 (eIF-3) complex.

It localises to the cytoplasm. In terms of biological role, component of the eukaryotic translation initiation factor 3 (eIF-3) complex, which is involved in protein synthesis of a specialized repertoire of mRNAs and, together with other initiation factors, stimulates binding of mRNA and methionyl-tRNAi to the 40S ribosome. The eIF-3 complex specifically targets and initiates translation of a subset of mRNAs involved in cell proliferation. In Bombyx mori (Silk moth), this protein is Eukaryotic translation initiation factor 3 subunit C.